The following is a 365-amino-acid chain: Peptide chain release factor 2 (365 aa).

Gln252 is subject to N5-methylglutamine.

This sequence belongs to the prokaryotic/mitochondrial release factor family. Methylated by PrmC. Methylation increases the termination efficiency of RF2.

It localises to the cytoplasm. Functionally, peptide chain release factor 2 directs the termination of translation in response to the peptide chain termination codons UGA and UAA. In Yersinia enterocolitica serotype O:8 / biotype 1B (strain NCTC 13174 / 8081), this protein is Peptide chain release factor 2.